Here is a 287-residue protein sequence, read N- to C-terminus: Orotidine 5'-phosphate decarboxylase (287 aa).

Catalysis depends on Lys-99, which acts as the Proton donor.

This sequence belongs to the OMP decarboxylase family. Type 2 subfamily.

It catalyses the reaction orotidine 5'-phosphate + H(+) = UMP + CO2. Its pathway is pyrimidine metabolism; UMP biosynthesis via de novo pathway; UMP from orotate: step 2/2. This chain is Orotidine 5'-phosphate decarboxylase, found in Clostridium novyi (strain NT).